Reading from the N-terminus, the 159-residue chain is Nucleotide-binding protein PSPTO_4393 (159 aa).

It belongs to the YajQ family.

Nucleotide-binding protein. The chain is Nucleotide-binding protein PSPTO_4393 from Pseudomonas syringae pv. tomato (strain ATCC BAA-871 / DC3000).